The chain runs to 365 residues: TD and POZ domain-containing protein 1 (365 aa).

Positions 19–149 (KFCYKWTISN…EDQLTICCKV (131 aa)) constitute an MATH domain. Residues 188 to 250 (TDCCLLVAGH…EMMGFIYTGK (63 aa)) enclose the BTB domain.

This sequence belongs to the Tdpoz family.

The chain is TD and POZ domain-containing protein 1 from Mus musculus (Mouse).